A 480-amino-acid polypeptide reads, in one-letter code: tRNA-2-methylthio-N(6)-dimethylallyladenosine synthase (480 aa).

The 117-residue stretch at 29-145 folds into the MTTase N-terminal domain; sequence GSFWIQTFGC…LEALLTQVDN (117 aa). The [4Fe-4S] cluster site is built by Cys-38, Cys-74, Cys-108, Cys-180, Cys-184, and Cys-187. The 238-residue stretch at 166-403 folds into the Radical SAM core domain; it reads RDSTICAWVN…NALVERVALQ (238 aa). Positions 406-474 constitute a TRAM domain; it reads SRYSGKVEQV…AFSLSGTPCD (69 aa).

The protein belongs to the methylthiotransferase family. MiaB subfamily. Monomer. [4Fe-4S] cluster is required as a cofactor.

It localises to the cytoplasm. It carries out the reaction N(6)-dimethylallyladenosine(37) in tRNA + (sulfur carrier)-SH + AH2 + 2 S-adenosyl-L-methionine = 2-methylsulfanyl-N(6)-dimethylallyladenosine(37) in tRNA + (sulfur carrier)-H + 5'-deoxyadenosine + L-methionine + A + S-adenosyl-L-homocysteine + 2 H(+). Its function is as follows. Catalyzes the methylthiolation of N6-(dimethylallyl)adenosine (i(6)A), leading to the formation of 2-methylthio-N6-(dimethylallyl)adenosine (ms(2)i(6)A) at position 37 in tRNAs that read codons beginning with uridine. The protein is tRNA-2-methylthio-N(6)-dimethylallyladenosine synthase of Prochlorococcus marinus (strain MIT 9303).